We begin with the raw amino-acid sequence, 231 residues long: uncharacterized protein (231 aa).

10–34 serves as a coordination point for NADP(+); the sequence is VVTGAGSGIGEAIATLLHEEGAKVV. A substrate-binding site is contributed by S140. Residue Y153 is the Proton acceptor of the active site.

This sequence belongs to the short-chain dehydrogenases/reductases (SDR) family.

This is an uncharacterized protein from Staphylococcus aureus (strain COL).